A 443-amino-acid chain; its full sequence is Na(+)-translocating NADH-quinone reductase subunit A (443 aa).

This sequence belongs to the NqrA family. Composed of six subunits; NqrA, NqrB, NqrC, NqrD, NqrE and NqrF.

It carries out the reaction a ubiquinone + n Na(+)(in) + NADH + H(+) = a ubiquinol + n Na(+)(out) + NAD(+). Functionally, NQR complex catalyzes the reduction of ubiquinone-1 to ubiquinol by two successive reactions, coupled with the transport of Na(+) ions from the cytoplasm to the periplasm. NqrA to NqrE are probably involved in the second step, the conversion of ubisemiquinone to ubiquinol. The protein is Na(+)-translocating NADH-quinone reductase subunit A of Actinobacillus succinogenes (strain ATCC 55618 / DSM 22257 / CCUG 43843 / 130Z).